A 561-amino-acid chain; its full sequence is DNA mismatch repair protein MutL (561 aa).

This sequence belongs to the DNA mismatch repair MutL/HexB family.

Functionally, this protein is involved in the repair of mismatches in DNA. It is required for dam-dependent methyl-directed DNA mismatch repair. May act as a 'molecular matchmaker', a protein that promotes the formation of a stable complex between two or more DNA-binding proteins in an ATP-dependent manner without itself being part of a final effector complex. The polypeptide is DNA mismatch repair protein MutL (Rippkaea orientalis (strain PCC 8801 / RF-1) (Cyanothece sp. (strain PCC 8801))).